The following is a 469-amino-acid chain: GTPase Der (469 aa).

EngA-type G domains follow at residues 3 to 166 (PVIA…PEDE) and 177 to 350 (LRLA…ESAN). GTP is bound by residues 9–16 (GRPNVGKS), 56–60 (DTGGI), 118–121 (NKVD), 183–190 (GRPNVGKS), 230–234 (DTAGV), and 295–298 (NKWD). Residues 351-435 (LKVSPAKLTQ…PVKIEFKTSE (85 aa)) form the KH-like domain.

This sequence belongs to the TRAFAC class TrmE-Era-EngA-EngB-Septin-like GTPase superfamily. EngA (Der) GTPase family. In terms of assembly, associates with the 50S ribosomal subunit.

Functionally, GTPase that plays an essential role in the late steps of ribosome biogenesis. In Acinetobacter baumannii (strain ACICU), this protein is GTPase Der.